A 358-amino-acid chain; its full sequence is MRNVIKLTWSRRKRSASLDKGENIMKLAFAFATAAIVVAAAFPALADTLTVYSPQGGERGAWIAEQAKAAGHEIKLLNAGGGELYDRLIAEENNPQADVVLGMVDTSMALLKKEGLFQPYSPSWAKDLPAQYKDAEGLVHKFWQTPIVLAYYPDRLADPDAPKSWLDLTKDDYEGKYVIGSTAAQTTRMYLAGILVRFLDADGEVSDEGWDFLDRFYAEGIIANDADSQLEAFKSGRASIDLNWLGGALKRADDLDAKVQVIDTDGGTPVISEGVAIMAGTDQLDEAKAFVDWWGSADVMAAYAAKFGQVPVLPEALAKSPATVQANAKLVNTQPIDWDAIAPKLDSWLQKIELEIRQ.

Positions 1-46 (MRNVIKLTWSRRKRSASLDKGENIMKLAFAFATAAIVVAAAFPALA) are cleaved as a signal peptide.

This sequence belongs to the bacterial solute-binding protein 1 family.

It is found in the periplasm. Functionally, probably part of the binding-protein-dependent transport system y4fNOP. This Sinorhizobium fredii (strain NBRC 101917 / NGR234) protein is Probable ABC transporter periplasmic-binding protein y4fP.